We begin with the raw amino-acid sequence, 1645 residues long: Thrombospondin type-1 domain-containing protein 7A (1645 aa).

The first 38 residues, 1–38 (MGLRAGRLASPSRGVLQLLRLPLLLLLLLSSGARGAAA), serve as a signal peptide directing secretion. Topologically, residues 39 to 1595 (QGDTEVPTLY…FGPDGRLKTW (1557 aa)) are extracellular. TSP type-1 domains lie at 46–105 (TLYL…KVCD), 109–181 (ELYD…IPCQ), and 183–236 (DCIV…NPCE). The N-linked (GlcNAc...) asparagine glycan is linked to asparagine 223. The disordered stretch occupies residues 255–300 (PHTRQARQARRRGKNKEREKERGKAVKDPEARELIKKKRNRNRQNR). A coiled-coil region spans residues 256–304 (HTRQARQARRRGKNKEREKERGKAVKDPEARELIKKKRNRNRQNRQENR). Positions 258-269 (RQARQARRRGKN) are enriched in basic residues. Residues 270–288 (KEREKERGKAVKDPEAREL) are compositionally biased toward basic and acidic residues. Residues 289-298 (IKKKRNRNRQ) are compositionally biased toward basic residues. N-linked (GlcNAc...) asparagine glycosylation occurs at asparagine 321. 16 TSP type-1 domains span residues 349 to 405 (ECQV…VSQG), 412 to 499 (ATYG…VPCP), 501 to 563 (ECEV…PSCY), 623 to 684 (DCVL…HPCT), 685 to 758 (VYHW…LPCR), 760 to 820 (DCVV…PTCH), 821 to 893 (SYRW…IPCQ), 895 to 948 (DCQF…CPCD), 949 to 1022 (KYNA…IPCP), 1024 to 1084 (DCKL…SDCN), 1085 to 1152 (QYIW…LPCP), 1154 to 1208 (DCVI…KNCY), 1209 to 1272 (HYDY…VECP), 1274 to 1329 (NCQL…KPCY), 1330 to 1400 (RWQY…QPCP), and 1402 to 1463 (DCYL…GQCY). 3 cysteine pairs are disulfide-bonded: cysteine 424-cysteine 494, cysteine 444-cysteine 498, and cysteine 455-cysteine 483. Asparagine 439 is a glycosylation site (N-linked (GlcNAc...) asparagine). The N-linked (GlcNAc...) asparagine glycan is linked to asparagine 489. Disulfide bonds link cysteine 624–cysteine 666 and cysteine 635–cysteine 639. A glycan (N-linked (GlcNAc...) asparagine) is linked at asparagine 668. 7 disulfide bridges follow: cysteine 678–cysteine 683, cysteine 696–cysteine 753, cysteine 717–cysteine 757, cysteine 728–cysteine 741, cysteine 761–cysteine 803, cysteine 772–cysteine 776, and cysteine 813–cysteine 819. Asparagine 706 carries an N-linked (GlcNAc...) asparagine glycan. N-linked (GlcNAc...) asparagine glycosylation is present at asparagine 957. 6 disulfide bridges follow: cysteine 961-cysteine 1017, cysteine 983-cysteine 1021, cysteine 994-cysteine 1007, cysteine 1025-cysteine 1062, cysteine 1036-cysteine 1040, and cysteine 1079-cysteine 1083. A glycan (N-linked (GlcNAc...) asparagine) is linked at asparagine 1032. Residues cysteine 1201 and cysteine 1207 are joined by a disulfide bond. Residue asparagine 1213 is glycosylated (N-linked (GlcNAc...) asparagine). Disulfide bonds link cysteine 1220–cysteine 1267, cysteine 1228–cysteine 1271, cysteine 1239–cysteine 1252, cysteine 1275–cysteine 1313, cysteine 1286–cysteine 1290, cysteine 1323–cysteine 1328, cysteine 1339–cysteine 1395, cysteine 1346–cysteine 1399, cysteine 1357–cysteine 1376, cysteine 1403–cysteine 1447, cysteine 1414–cysteine 1418, and cysteine 1457–cysteine 1462. The N-linked (GlcNAc...) asparagine glycan is linked to asparagine 1264. Asparagine 1354 carries N-linked (GlcNAc...) asparagine glycosylation. N-linked (GlcNAc...) asparagine glycosylation is found at asparagine 1488 and asparagine 1535. The helical transmembrane segment at 1596–1616 (VYGVAAGAFVLLVFIVSMIYL) threads the bilayer. Over 1617-1645 (ACKKPKKPQRRQNNRLKPLTLAYDGDADM) the chain is Cytoplasmic.

Proteolytic cleavage in the extracellular region generates a 210 kDa soluble form. In terms of processing, extensively N-glycosylated. Detected on kidney podocytes along the glomerular capillary wall (at protein level).

It localises to the cell membrane. Its subcellular location is the cell projection. The protein localises to the secreted. In terms of biological role, plays a role in actin cytoskeleton rearrangement. The soluble form promotes endothelial cell migration and filopodia formation during sprouting angiogenesis via a FAK-dependent mechanism. The protein is Thrombospondin type-1 domain-containing protein 7A (Thsd7a) of Mus musculus (Mouse).